The sequence spans 948 residues: Peroxisomal ATPase pex6 (948 aa).

An ATP-binding site is contributed by 695 to 702 (GPPGTGKT).

The protein belongs to the AAA ATPase family. As to quaternary structure, interacts with PEX1; forming the PEX1-PEX6 AAA ATPase complex, which is composed of a heterohexamer formed by a trimer of PEX1-PEX6 dimers.

Its subcellular location is the cytoplasm. It localises to the cytosol. The protein localises to the peroxisome membrane. It carries out the reaction ATP + H2O = ADP + phosphate + H(+). Functionally, component of the PEX1-PEX6 AAA ATPase complex, a protein dislocase complex that mediates the ATP-dependent extraction of the PEX5 receptor from peroxisomal membranes, an essential step for PEX5 recycling. Specifically recognizes PEX5 monoubiquitinated at 'Cys-6', and pulls it out of the peroxisome lumen through the PEX2-PEX10-PEX12 retrotranslocation channel. Extraction by the PEX1-PEX6 AAA ATPase complex is accompanied by unfolding of the TPR repeats and release of bound cargo from PEX5. The chain is Peroxisomal ATPase pex6 (pex6) from Schizosaccharomyces pombe (strain 972 / ATCC 24843) (Fission yeast).